The chain runs to 334 residues: Protein CUP-SHAPED COTYLEDON 3 (334 aa).

The region spanning 22 to 171 is the NAC domain; the sequence is LPPGFRFHPT…EWVICRVFNK (150 aa). Residues 121–177 mediate DNA binding; that stretch reads VGMKKTLVFYKGRAPRGLKTKWVMHEYRLENDHSHRHTCKEEWVICRVFNKTGDRKN.

In a general manner, present at the boundaries between mersitems and araising primordia.

Its subcellular location is the nucleus. Functionally, transcription activator. Involved in molecular mechanisms regulating shoot apical meristem (SAM) formation during embryogenesis and organ separation. Required for axillary meristem initiation and separation of the meristem from the main stem. May act as an inhibitor of cell division. The polypeptide is Protein CUP-SHAPED COTYLEDON 3 (NAC031) (Arabidopsis thaliana (Mouse-ear cress)).